A 429-amino-acid polypeptide reads, in one-letter code: Serine--tRNA ligase (429 aa).

236-238 (TAE) is a binding site for L-serine. ATP is bound at residue 267-269 (RSE). Glu-290 provides a ligand contact to L-serine. ATP is bound at residue 354 to 357 (EISS). Ser-390 contacts L-serine.

It belongs to the class-II aminoacyl-tRNA synthetase family. Type-1 seryl-tRNA synthetase subfamily. Homodimer. The tRNA molecule binds across the dimer.

Its subcellular location is the cytoplasm. The catalysed reaction is tRNA(Ser) + L-serine + ATP = L-seryl-tRNA(Ser) + AMP + diphosphate + H(+). It carries out the reaction tRNA(Sec) + L-serine + ATP = L-seryl-tRNA(Sec) + AMP + diphosphate + H(+). The protein operates within aminoacyl-tRNA biosynthesis; selenocysteinyl-tRNA(Sec) biosynthesis; L-seryl-tRNA(Sec) from L-serine and tRNA(Sec): step 1/1. In terms of biological role, catalyzes the attachment of serine to tRNA(Ser). Is also able to aminoacylate tRNA(Sec) with serine, to form the misacylated tRNA L-seryl-tRNA(Sec), which will be further converted into selenocysteinyl-tRNA(Sec). The chain is Serine--tRNA ligase from Photorhabdus laumondii subsp. laumondii (strain DSM 15139 / CIP 105565 / TT01) (Photorhabdus luminescens subsp. laumondii).